The primary structure comprises 315 residues: Methionyl-tRNA formyltransferase (315 aa).

Residue 112–115 coordinates (6S)-5,6,7,8-tetrahydrofolate; the sequence is SLLP.

Belongs to the Fmt family.

The catalysed reaction is L-methionyl-tRNA(fMet) + (6R)-10-formyltetrahydrofolate = N-formyl-L-methionyl-tRNA(fMet) + (6S)-5,6,7,8-tetrahydrofolate + H(+). In terms of biological role, attaches a formyl group to the free amino group of methionyl-tRNA(fMet). The formyl group appears to play a dual role in the initiator identity of N-formylmethionyl-tRNA by promoting its recognition by IF2 and preventing the misappropriation of this tRNA by the elongation apparatus. The chain is Methionyl-tRNA formyltransferase from Leptospira borgpetersenii serovar Hardjo-bovis (strain JB197).